The sequence spans 339 residues: Agamous-like MADS-box protein AGL86 (339 aa).

The MADS-box domain occupies 1-60 (MRSKIKLSLIANKTSRRTTFRKRKGGITNKLHELTTLCGVKACAVISSPYENPVVWPSTE). The stretch at 86 to 112 (TYLQDKITKETKKLESLRRENRESQLR) forms a coiled coil.

As to quaternary structure, interacts with AGL61/DIANA and AGL62.

It localises to the nucleus. In terms of biological role, probable transcription factor. This is Agamous-like MADS-box protein AGL86 (AGL86) from Arabidopsis thaliana (Mouse-ear cress).